A 317-amino-acid polypeptide reads, in one-letter code: Serpentine receptor class delta-44 (317 aa).

The next 6 helical transmembrane spans lie at 5–25 (ILSV…IILI), 90–110 (MFHI…LTTF), 130–150 (ILFI…LVII), 185–205 (RVNG…CLLL), 235–255 (IFGH…SLIT), and 264–284 (FFIF…TMYF).

Belongs to the nematode receptor-like protein srd family.

It localises to the membrane. The polypeptide is Serpentine receptor class delta-44 (srd-44) (Caenorhabditis elegans).